The sequence spans 284 residues: Bifunctional protein FolD (284 aa).

Residues 163-165 (GAS), isoleucine 188, and isoleucine 229 each bind NADP(+).

It belongs to the tetrahydrofolate dehydrogenase/cyclohydrolase family. In terms of assembly, homodimer.

It carries out the reaction (6R)-5,10-methylene-5,6,7,8-tetrahydrofolate + NADP(+) = (6R)-5,10-methenyltetrahydrofolate + NADPH. The catalysed reaction is (6R)-5,10-methenyltetrahydrofolate + H2O = (6R)-10-formyltetrahydrofolate + H(+). It participates in one-carbon metabolism; tetrahydrofolate interconversion. Catalyzes the oxidation of 5,10-methylenetetrahydrofolate to 5,10-methenyltetrahydrofolate and then the hydrolysis of 5,10-methenyltetrahydrofolate to 10-formyltetrahydrofolate. In Nautilia profundicola (strain ATCC BAA-1463 / DSM 18972 / AmH), this protein is Bifunctional protein FolD.